The following is a 535-amino-acid chain: uncharacterized protein (535 aa).

WD repeat units follow at residues 189–226 (RDDF…TRVL), 228–267 (ESIY…PRIS), 269–314 (HHPG…AVLV), 320–359 (AHDE…QPLY), 362–404 (QQNA…KIDE), and 462–505 (VHSV…SWHN).

It belongs to the WD repeat CDC20/Fizzy family.

This is an uncharacterized protein from Schizosaccharomyces pombe (strain 972 / ATCC 24843) (Fission yeast).